The sequence spans 164 residues: Dehydrin Rab16B (164 aa).

Residues 1-164 (MENYQGQHGY…KIKEKLPGQH (164 aa)) form a disordered region. Residues 25-53 (GQYGGGATAPGGGHGAMGMGGHAGAGAGG) show a composition bias toward gly residues. The segment covering 107–117 (GNNQQQQQMMG) has biased composition (low complexity). Residues 147–164 (GEKKGFMDKIKEKLPGQH) show a composition bias toward basic and acidic residues.

This sequence belongs to the plant dehydrin family.

The chain is Dehydrin Rab16B (RAB16B) from Oryza sativa subsp. indica (Rice).